A 90-amino-acid polypeptide reads, in one-letter code: U7-theraphotoxin-Hhn1e (90 aa).

An N-terminal signal peptide occupies residues methionine 1–serine 19. The propeptide occupies phenylalanine 20–glutamate 50. 3 cysteine pairs are disulfide-bonded: cysteine 51–cysteine 65, cysteine 58–cysteine 70, and cysteine 64–cysteine 81.

This sequence belongs to the neurotoxin 10 (Hwtx-1) family. 13 (Hntx-13) subfamily. In terms of tissue distribution, expressed by the venom gland.

It is found in the secreted. Ion channel inhibitor. The protein is U7-theraphotoxin-Hhn1e of Cyriopagopus hainanus (Chinese bird spider).